Consider the following 299-residue polypeptide: Taste receptor type 2 member 19 (299 aa).

Residue methionine 1 is a topological domain, extracellular. Residues 2–22 (MCFLLIILSILVVFAFVLGNF) form a helical membrane-spanning segment. Residues 23-55 (SNGFIALVNVIDWVNTRKISSADQILTALVVSR) are Cytoplasmic-facing. The chain crosses the membrane as a helical span at residues 56–76 (IGLLWVMLFLWYATVFNSALY). Over 77-87 (GLEVRIVASNA) the chain is Extracellular. Residues 88 to 108 (WAVMNHFSIWLAASLSIFCLL) traverse the membrane as a helical segment. Residues 109-127 (KIANFSNLIFLHLKKRIKS) lie on the Cytoplasmic side of the membrane. The helical transmembrane segment at 128–148 (VVLVILLGPLVFLICNLAVIT) threads the bilayer. Over 149 to 181 (MDERVWTKEYEGNVTWKIKLRNAIQLSSLTVTT) the chain is Extracellular. The N-linked (GlcNAc...) asparagine glycan is linked to asparagine 161. The chain crosses the membrane as a helical span at residues 182–202 (LANLIPFTLSLICFLLLICSL). At 203–226 (CKHLKKMRLHSKGSQDPSTKVHIK) the chain is on the cytoplasmic side. The helical transmembrane segment at 227–247 (ALQTVTSFLMLFAIYFLCIIT) threads the bilayer. The Extracellular portion of the chain corresponds to 248–259 (STWNLRTQQSKL). Residues 260 to 280 (VLLLCQTVAIMYPSFHSFILI) form a helical membrane-spanning segment. At 281-299 (MGSRKLKQTFLSVLWQMTR) the chain is on the cytoplasmic side.

Belongs to the G-protein coupled receptor T2R family.

The protein resides in the membrane. Receptor that may play a role in the perception of bitterness and is gustducin-linked. May play a role in sensing the chemical composition of the gastrointestinal content. The activity of this receptor may stimulate alpha gustducin, mediate PLC-beta-2 activation and lead to the gating of TRPM5. This chain is Taste receptor type 2 member 19 (TAS2R19), found in Pan paniscus (Pygmy chimpanzee).